The chain runs to 321 residues: tRNA U34 carboxymethyltransferase (321 aa).

Carboxy-S-adenosyl-L-methionine contacts are provided by residues K90, W104, K109, G129, D151–T153, I180–E181, M195, Y199, and R314.

Belongs to the class I-like SAM-binding methyltransferase superfamily. CmoB family. Homotetramer.

The enzyme catalyses carboxy-S-adenosyl-L-methionine + 5-hydroxyuridine(34) in tRNA = 5-carboxymethoxyuridine(34) in tRNA + S-adenosyl-L-homocysteine + H(+). Catalyzes carboxymethyl transfer from carboxy-S-adenosyl-L-methionine (Cx-SAM) to 5-hydroxyuridine (ho5U) to form 5-carboxymethoxyuridine (cmo5U) at position 34 in tRNAs. The chain is tRNA U34 carboxymethyltransferase from Haemophilus influenzae (strain PittEE).